Here is a 282-residue protein sequence, read N- to C-terminus: Large ribosomal subunit protein uL2 (282 aa).

Disordered regions lie at residues 31–54 (KRLT…TRHI) and 223–282 (LAMN…NTQR). 2 stretches are compositionally biased toward basic residues: residues 34–54 (TKPV…TRHI) and 270–282 (VTRR…NTQR).

The protein belongs to the universal ribosomal protein uL2 family. Part of the 50S ribosomal subunit. Forms a bridge to the 30S subunit in the 70S ribosome.

One of the primary rRNA binding proteins. Required for association of the 30S and 50S subunits to form the 70S ribosome, for tRNA binding and peptide bond formation. It has been suggested to have peptidyltransferase activity; this is somewhat controversial. Makes several contacts with the 16S rRNA in the 70S ribosome. This Anaeromyxobacter dehalogenans (strain 2CP-1 / ATCC BAA-258) protein is Large ribosomal subunit protein uL2.